A 211-amino-acid chain; its full sequence is Urease accessory protein UreE (211 aa).

The disordered stretch occupies residues 170–211; the sequence is EHHGHSHDRGCDHSHSHSHDHDHDHGHVHGPGCGHAPHHRHD. The span at 176 to 196 shows a compositional bias: basic and acidic residues; the sequence is HDRGCDHSHSHSHDHDHDHGH.

This sequence belongs to the UreE family.

The protein localises to the cytoplasm. Involved in urease metallocenter assembly. Binds nickel. Probably functions as a nickel donor during metallocenter assembly. In Ralstonia nicotianae (strain ATCC BAA-1114 / GMI1000) (Ralstonia solanacearum), this protein is Urease accessory protein UreE.